Reading from the N-terminus, the 359-residue chain is Transcription factor MYB115 (359 aa).

The segment covering 1-17 (MYHQNLISSTPNQNSNP) has biased composition (polar residues). A disordered region spans residues 1–21 (MYHQNLISSTPNQNSNPHDWD). HTH myb-type domains are found at residues 153-208 (KDII…RPNI) and 209-259 (KKND…RRLH). 2 consecutive DNA-binding regions (H-T-H motif) follow at residues 181–204 (WTSIAKMFQGRVGKQCRERWHNHL) and 232–255 (WTEIAKRLPGRSENIVKNHWNATK).

In terms of tissue distribution, accumulates in reproductive organs (e.g. flowers and siliques). Expressed at very low levels in vegetative organs.

It localises to the nucleus. In terms of biological role, transcription activator that recognizes the motif 5'-TAACGG-3' in the promoter of target genes. Promotes vegetative-to-embryonic transition and the formation of somatic embryos from root explants in a WUS-independent manner. Together with MYB118, activates the transcription of S-ACP-DES2/AAD2 and S-ACP-DES3/AAD3 thus promoting the biosynthesis of omega-7 monounsaturated fatty acid in seed endosperm. The chain is Transcription factor MYB115 from Arabidopsis thaliana (Mouse-ear cress).